The chain runs to 495 residues: UDP-N-acetylmuramoyl-L-alanyl-D-glutamate--2,6-diaminopimelate ligase (495 aa).

Residues Leu27, Ser29, and 44 to 46 (HQT) each bind UDP-N-acetyl-alpha-D-muramoyl-L-alanyl-D-glutamate. Residue 116–122 (GTNGKTT) participates in ATP binding. UDP-N-acetyl-alpha-D-muramoyl-L-alanyl-D-glutamate-binding positions include Asn157, 158-159 (TT), Ser185, Gln191, and Arg193. An N6-carboxylysine modification is found at Lys225. Residues Arg390, 414-417 (DNPR), Gly465, and Glu469 contribute to the meso-2,6-diaminopimelate site. The Meso-diaminopimelate recognition motif signature appears at 414 to 417 (DNPR).

Belongs to the MurCDEF family. MurE subfamily. The cofactor is Mg(2+). Carboxylation is probably crucial for Mg(2+) binding and, consequently, for the gamma-phosphate positioning of ATP.

The protein resides in the cytoplasm. The enzyme catalyses UDP-N-acetyl-alpha-D-muramoyl-L-alanyl-D-glutamate + meso-2,6-diaminopimelate + ATP = UDP-N-acetyl-alpha-D-muramoyl-L-alanyl-gamma-D-glutamyl-meso-2,6-diaminopimelate + ADP + phosphate + H(+). The protein operates within cell wall biogenesis; peptidoglycan biosynthesis. Functionally, catalyzes the addition of meso-diaminopimelic acid to the nucleotide precursor UDP-N-acetylmuramoyl-L-alanyl-D-glutamate (UMAG) in the biosynthesis of bacterial cell-wall peptidoglycan. The polypeptide is UDP-N-acetylmuramoyl-L-alanyl-D-glutamate--2,6-diaminopimelate ligase (Photorhabdus laumondii subsp. laumondii (strain DSM 15139 / CIP 105565 / TT01) (Photorhabdus luminescens subsp. laumondii)).